We begin with the raw amino-acid sequence, 68 residues long: Sec-independent protein translocase protein TatA (68 aa).

A helical transmembrane segment spans residues 1 to 21 (MGSFSIWHWLIVLVVVLLLFG). The tract at residues 46–68 (EEAASADKTIDGKTVEHKSDEVR) is disordered. Basic and acidic residues predominate over residues 53-68 (KTIDGKTVEHKSDEVR).

Belongs to the TatA/E family. The Tat system comprises two distinct complexes: a TatABC complex, containing multiple copies of TatA, TatB and TatC subunits, and a separate TatA complex, containing only TatA subunits. Substrates initially bind to the TatABC complex, which probably triggers association of the separate TatA complex to form the active translocon.

It localises to the cell inner membrane. Part of the twin-arginine translocation (Tat) system that transports large folded proteins containing a characteristic twin-arginine motif in their signal peptide across membranes. TatA could form the protein-conducting channel of the Tat system. This Sinorhizobium fredii (strain NBRC 101917 / NGR234) protein is Sec-independent protein translocase protein TatA.